Reading from the N-terminus, the 476-residue chain is Bifunctional protein HldE (476 aa).

The tract at residues 1–318 (MKPILPDYSQ…AEAIHGSQDT (318 aa)) is ribokinase. 195–198 (NMAE) contacts ATP. Residue Asp264 is part of the active site. The cytidylyltransferase stretch occupies residues 344-476 (MTNGCFDILH…IIKAIKGGRG (133 aa)).

The protein in the N-terminal section; belongs to the carbohydrate kinase PfkB family. In the C-terminal section; belongs to the cytidylyltransferase family. Homodimer.

It carries out the reaction D-glycero-beta-D-manno-heptose 7-phosphate + ATP = D-glycero-beta-D-manno-heptose 1,7-bisphosphate + ADP + H(+). The catalysed reaction is D-glycero-beta-D-manno-heptose 1-phosphate + ATP + H(+) = ADP-D-glycero-beta-D-manno-heptose + diphosphate. Its pathway is nucleotide-sugar biosynthesis; ADP-L-glycero-beta-D-manno-heptose biosynthesis; ADP-L-glycero-beta-D-manno-heptose from D-glycero-beta-D-manno-heptose 7-phosphate: step 1/4. The protein operates within nucleotide-sugar biosynthesis; ADP-L-glycero-beta-D-manno-heptose biosynthesis; ADP-L-glycero-beta-D-manno-heptose from D-glycero-beta-D-manno-heptose 7-phosphate: step 3/4. In terms of biological role, catalyzes the phosphorylation of D-glycero-D-manno-heptose 7-phosphate at the C-1 position to selectively form D-glycero-beta-D-manno-heptose-1,7-bisphosphate. Catalyzes the ADP transfer from ATP to D-glycero-beta-D-manno-heptose 1-phosphate, yielding ADP-D-glycero-beta-D-manno-heptose. The chain is Bifunctional protein HldE from Vibrio atlanticus (strain LGP32) (Vibrio splendidus (strain Mel32)).